The sequence spans 203 residues: Snake venom metalloproteinase fibrolase (203 aa).

Position 1 is a pyrrolidone carboxylic acid (Gln-1). One can recognise a Peptidase M12B domain in the interval 7-203 (RYVQLVIVAD…NNPQCILNKP (197 aa)). 3 disulfides stabilise this stretch: Cys-118–Cys-198, Cys-158–Cys-182, and Cys-160–Cys-165. Position 143 (His-143) interacts with Zn(2+). The active site involves Glu-144. Residues His-147 and His-153 each contribute to the Zn(2+) site.

This sequence belongs to the venom metalloproteinase (M12B) family. P-I subfamily. In terms of assembly, monomer. Requires Zn(2+) as cofactor. In terms of tissue distribution, expressed by the venom gland.

The protein localises to the secreted. The enzyme catalyses Hydrolysis of 14-Ala-|-Leu-15 in insulin B chain and 413-Lys-|-Leu-414 in alpha-chain of fibrinogen.. Is inhibited by EDTA, o-phenanthroline and tetraethylenepentamine. In terms of biological role, snake venom zinc metalloprotease that exhibits direct fibrinolytic activity. The chain is Snake venom metalloproteinase fibrolase from Agkistrodon contortrix contortrix (Southern copperhead).